The chain runs to 302 residues: Ribosomal protein L11 methyltransferase (302 aa).

Threonine 148, glycine 169, aspartate 191, and asparagine 237 together coordinate S-adenosyl-L-methionine.

The protein belongs to the methyltransferase superfamily. PrmA family.

The protein localises to the cytoplasm. The catalysed reaction is L-lysyl-[protein] + 3 S-adenosyl-L-methionine = N(6),N(6),N(6)-trimethyl-L-lysyl-[protein] + 3 S-adenosyl-L-homocysteine + 3 H(+). Methylates ribosomal protein L11. This is Ribosomal protein L11 methyltransferase from Desulfosudis oleivorans (strain DSM 6200 / JCM 39069 / Hxd3) (Desulfococcus oleovorans).